The following is a 207-amino-acid chain: Glycerol-3-phosphate acyltransferase (207 aa).

The next 5 helical transmembrane spans lie at 2 to 22, 47 to 67, 72 to 92, 121 to 141, and 155 to 175; these read ILVLCFILAYFIGAIPFGVVI, MLGPVGGSIVLVLDILKGTLA, ILFGIEHHWLVLIVGLAAVFG, FFVIAFAIWFSLILLTSMVSV, and LVYHDWLLTTVACGLLVVFLI.

It belongs to the PlsY family. As to quaternary structure, probably interacts with PlsX.

The protein resides in the cell membrane. The enzyme catalyses an acyl phosphate + sn-glycerol 3-phosphate = a 1-acyl-sn-glycero-3-phosphate + phosphate. It participates in lipid metabolism; phospholipid metabolism. In terms of biological role, catalyzes the transfer of an acyl group from acyl-phosphate (acyl-PO(4)) to glycerol-3-phosphate (G3P) to form lysophosphatidic acid (LPA). This enzyme utilizes acyl-phosphate as fatty acyl donor, but not acyl-CoA or acyl-ACP. This chain is Glycerol-3-phosphate acyltransferase, found in Lacticaseibacillus casei (strain BL23) (Lactobacillus casei).